Here is a 453-residue protein sequence, read N- to C-terminus: tRNA modification GTPase MnmE (453 aa).

Residues Arg22, Glu79, and Lys119 each coordinate (6S)-5-formyl-5,6,7,8-tetrahydrofolate. Residues Gly215–Gly376 enclose the TrmE-type G domain. Position 225 (Asn225) interacts with K(+). GTP contacts are provided by residues Asn225–Ser230, Thr244–Thr250, Asp269–Gly272, and Asn334–Asp337. Residue Ser229 participates in Mg(2+) binding. Positions 244, 246, and 249 each coordinate K(+). Residue Thr250 participates in Mg(2+) binding. Lys453 is a binding site for (6S)-5-formyl-5,6,7,8-tetrahydrofolate.

This sequence belongs to the TRAFAC class TrmE-Era-EngA-EngB-Septin-like GTPase superfamily. TrmE GTPase family. As to quaternary structure, homodimer. Heterotetramer of two MnmE and two MnmG subunits. K(+) is required as a cofactor.

The protein resides in the cytoplasm. Its function is as follows. Exhibits a very high intrinsic GTPase hydrolysis rate. Involved in the addition of a carboxymethylaminomethyl (cmnm) group at the wobble position (U34) of certain tRNAs, forming tRNA-cmnm(5)s(2)U34. The polypeptide is tRNA modification GTPase MnmE (Shewanella loihica (strain ATCC BAA-1088 / PV-4)).